A 171-amino-acid polypeptide reads, in one-letter code: uncharacterized protein (171 aa).

Positions 1–20 are cleaved as a signal peptide; sequence MRDFYLFLGAVFLLVLGVWA.

This is an uncharacterized protein from Aquifex aeolicus (strain VF5).